The sequence spans 290 residues: Syntaxin-1A (290 aa).

The tract at residues 1-21 (MTKDRLAALQAAQSDDEDMPE) is disordered. Over 1–267 (MTKDRLAALQ…KYQSKARRKK (267 aa)) the chain is Cytoplasmic. One can recognise a t-SNARE coiled-coil homology domain in the interval 194 to 256 (LADIEARHAD…QTATQDTKKA (63 aa)). A helical; Anchor for type IV membrane protein membrane pass occupies residues 268–289 (IWIAICVLIAIIILVVFLAIYL). Residue T290 is a topological domain, vesicular.

This sequence belongs to the syntaxin family. Post-translationally, (Microbial infection) Targeted and hydrolyzed by the light chain (LC) of P.bifermentans PMP1. Cleavage probably inhibits neurotransmitter release.

The protein resides in the cytoplasmic vesicle. It is found in the secretory vesicle. The protein localises to the synaptic vesicle membrane. In terms of biological role, plays a critical role in several secretory processes. This is Syntaxin-1A from Anopheles gambiae (African malaria mosquito).